A 536-amino-acid chain; its full sequence is ATP synthase subunit alpha, mitochondrial (536 aa).

The N-terminal 24 residues, 1–24, are a transit peptide targeting the mitochondrion; that stretch reads MFKNALRRAGVAAPRISRVAQRGY. 195–202 serves as a coordination point for ATP; that stretch reads GDRQTGKT.

In terms of assembly, F-type ATP synthases have 2 components, the catalytic core F(1) and the membrane-embedded component F(0), linked together by a central stalk and a peripheral stalk. The central stalk, also called rotor shaft, is often seen as part of F(1). The peripheral stalk is seen as part of F(0). F(0) contains the membrane channel next to the rotor. F-type ATP synthases form dimers but each monomer functions independently in ATP generation. The dimer consists of 17 different polypeptides: ATP1 (subunit alpha, 3 molecules per monomer, part of F(1)), ATP2 (subunit beta, 3 copies per monomer, part of F(1)), ATP3 (subunit gamma, part of the central stalk), ATP4 (subunit b, part of the peripheral stalk), ATP5/OSCP (subunit 5/OSCP, part of the peripheral stalk), ATP6 (subunit a, part of the peripheral stalk), ATP7 (subunit d, part of the peripheral stalk), ATP8 (subunit 8, part of the peripheral stalk), OLI1 (subunit c, part of the rotor, 10 molecules per monomer), ATP14 (subunit h, part of the peripheral stalk), ATP15 (subunit epsilon, part of the central stalk), ATP16 (subunit delta, part of the central stalk), ATP17 (subunit f, part of the peripheral stalk), ATP18 (subunit i/j, part of the peripheral stalk), ATP19 (subunit k, dimer-specific, at interface between monomers), ATP20 (subunit g, at interface between monomers), TIM11 (subunit e, at interface between monomers).

Its subcellular location is the mitochondrion inner membrane. Its function is as follows. Mitochondrial membrane ATP synthase (F(1)F(0) ATP synthase or Complex V) produces ATP from ADP in the presence of a proton gradient across the membrane which is generated by electron transport complexes of the respiratory chain. F-type ATP synthases consist of two structural domains, F(1) - containing the extramembraneous catalytic core, and F(0) - containing the membrane proton channel, linked together by a central stalk and a peripheral stalk. During catalysis, ATP synthesis in the catalytic domain of F(1) is coupled via a rotary mechanism of the central stalk subunits to proton translocation. Subunits alpha/ATP1 and beta/ATP2 form the catalytic core in F(1). Rotation of the central stalk against the surrounding alpha/ATP1(3)beta/ATP2(3) subunits leads to hydrolysis of ATP in three separate catalytic sites on the beta/ATP2 subunits. Subunit alpha/ATP1 does not bear the catalytic high-affinity ATP-binding sites. The protein is ATP synthase subunit alpha, mitochondrial of Yarrowia lipolytica (strain CLIB 122 / E 150) (Yeast).